Here is a 487-residue protein sequence, read N- to C-terminus: WD repeat, SAM and U-box domain-containing protein 1 (487 aa).

7 WD repeats span residues 10-47 (SHRDDVNCVAFSGDLLATCSADKSICVYSSRDFSELPF), 52-93 (GHGY…AVLE), 95-134 (PGRSPVRVCAFSPDSSHLVSGGSDGSIALWDFTSRTLRRT), 137-176 (VNDTSIVACSFTPCGQMFITGSTYGDLRLWDLNMNHLHAE), 179-227 (AHDL…SAGI), 237-276 (GQSAPVLSCAYSPDGQMLVSGSVDKTVTVYQADEGVLLYT), and 279-318 (QHDRYVTACAFSPTAPLIATGSMDKSVNIWRMEEGSSAQG). One can recognise an SAM domain in the interval 347–411 (WSEEEVLAWL…MKKIEELKMV (65 aa)). The U-box domain maps to 416–487 (GTPDEFLCPI…MAIFRWSTSQ (72 aa)).

This chain is WD repeat, SAM and U-box domain-containing protein 1 (wdsub1), found in Danio rerio (Zebrafish).